We begin with the raw amino-acid sequence, 162 residues long: MAARRDGWLGPAFGLRLLLATVLQTVSALGAEFSSESCRELGFSSNLLCSSCDLLGQFNLLQLDPDCRGCCQEEAQFETKKLYAGAILEVCGUKLGRFPQVQAFVRSDKPKLFKGLQIKYVRGSDPVLKLLDDSGNIAEELSILKWNTDSVEEFLSEKLERI.

An N-terminal signal peptide occupies residues 1–28 (MAARRDGWLGPAFGLRLLLATVLQTVSA). Residue Sec-93 is a non-standard amino acid, selenocysteine.

The protein belongs to the selenoprotein M/F family. Forms a tight complex with UGGT1/UGCGL1. Interacts with UGGT2/UGCGL2. Interacts with RDH11.

The protein resides in the endoplasmic reticulum lumen. Its function is as follows. May be involved in redox reactions associated with the formation of disulfide bonds. May contribute to the quality control of protein folding in the endoplasmic reticulum. May regulate protein folding by enhancing the catalytic activity of UGGT1/UGCGL1 and UGGT2/UGCGL2. The sequence is that of Selenoprotein F from Bos taurus (Bovine).